Reading from the N-terminus, the 146-residue chain is MORN repeat-containing protein 4 (146 aa).

MORN repeat units lie at residues 16-38, 39-61, 62-84, and 85-107; these read YRGEWKEGRRHGFGQLMFADGGT, YLGHFENGLFNGFGVLTFSDGSR, YEGEFAQGKFNGVGVFIRYDNMT, and FEGEFKNGRVDGFGLLTFPDGSH.

In terms of assembly, interacts with MYO3A.

The protein resides in the cytoplasm. The protein localises to the cell projection. It is found in the filopodium tip. It localises to the stereocilium. Plays a role in promoting axonal degeneration following neuronal injury by toxic insult or trauma. The protein is MORN repeat-containing protein 4 (MORN4) of Homo sapiens (Human).